Here is a 476-residue protein sequence, read N- to C-terminus: Mitochondrial-processing peptidase subunit beta (476 aa).

Residues 1-28 (MASRRLALNLAQGVKARAGGVINPFRRG) constitute a mitochondrion transit peptide. Position 84 (H84) interacts with Zn(2+). The active-site Proton acceptor is E87. Residues H88 and E164 each contribute to the Zn(2+) site.

It belongs to the peptidase M16 family. Heterodimer of mpp (alpha) and pep (beta) subunits, forming the mitochondrial processing protease (MPP) in which mpp is involved in substrate recognition and binding and pep is the catalytic subunit. Component of the ubiquinol-cytochrome c oxidoreductase (cytochrome b-c1 complex, complex III, CIII), a multisubunit enzyme composed of 10 subunits. The complex is composed of 3 respiratory subunits cytochrome b (cob), cytochrome c1 (cyt-1) and Rieske protein (fes-1), 2 core protein subunits pep and ucr-1, and 5 low-molecular weight protein subunits qcr6, qcr7, qcr8, qcr9 and probably NCU16844/qcr10. The complex exists as an obligatory dimer and forms supercomplexes (SCs) in the inner mitochondrial membrane with NADH-ubiquinone oxidoreductase (complex I, CI) and cytochrome c oxidase (complex IV, CIV), resulting in different assemblies (supercomplexes SCI(1)III(2), SCIII(2)IV(1) and SCIII(2)IV(2) as well as higher order I(x)III(y)IV(z) megacomplexes). The cofactor is Zn(2+).

It is found in the mitochondrion matrix. The protein resides in the mitochondrion inner membrane. It carries out the reaction Release of N-terminal transit peptides from precursor proteins imported into the mitochondrion, typically with Arg in position P2.. With respect to regulation, binding to mpp is required for catalytic activity. Inhibited by metal chelator ethylenediaminetetraacetic acid (EDTA). Catalytic subunit of the essential mitochondrial processing protease (MPP), which cleaves the mitochondrial sequence off newly imported precursors proteins. Preferentially, cleaves after an arginine at position P2. In terms of biological role, component of the ubiquinol-cytochrome c oxidoreductase, a multisubunit transmembrane complex that is part of the mitochondrial electron transport chain which drives oxidative phosphorylation. The respiratory chain contains 3 multisubunit complexes succinate dehydrogenase (complex II, CII), ubiquinol-cytochrome c oxidoreductase (cytochrome b-c1 complex, complex III, CIII) and cytochrome c oxidase (complex IV, CIV), that cooperate to transfer electrons derived from NADH and succinate to molecular oxygen, creating an electrochemical gradient over the inner membrane that drives transmembrane transport and the ATP synthase. The cytochrome b-c1 complex catalyzes electron transfer from ubiquinol to cytochrome c, linking this redox reaction to translocation of protons across the mitochondrial inner membrane, with protons being carried across the membrane as hydrogens on the quinol. In the process called Q cycle, 2 protons are consumed from the matrix, 4 protons are released into the intermembrane space and 2 electrons are passed to cytochrome c. This is Mitochondrial-processing peptidase subunit beta from Neurospora crassa (strain ATCC 24698 / 74-OR23-1A / CBS 708.71 / DSM 1257 / FGSC 987).